The primary structure comprises 217 residues: Uracil-DNA glycosylase (217 aa).

The Proton acceptor role is filled by Asp-62.

It belongs to the uracil-DNA glycosylase (UDG) superfamily. UNG family.

The protein localises to the cytoplasm. The catalysed reaction is Hydrolyzes single-stranded DNA or mismatched double-stranded DNA and polynucleotides, releasing free uracil.. Excises uracil residues from the DNA which can arise as a result of misincorporation of dUMP residues by DNA polymerase or due to deamination of cytosine. The sequence is that of Uracil-DNA glycosylase from Streptococcus pyogenes serotype M1.